The primary structure comprises 314 residues: Beta-lactamase (314 aa).

A signal peptide (tat-type signal) is located at residues 1–39 (MHPSTSRPSRRTLLTATAGAALAAATLVPGTAHASSGGR). The interval 31–50 (TAHASSGGRGHGSGSVSDAE) is disordered. Serine 89 (acyl-ester intermediate) is an active-site residue. Substrate is bound at residue 259–261 (KTG).

It belongs to the class-A beta-lactamase family. Predicted to be exported by the Tat system. The position of the signal peptide cleavage has been experimentally proven.

It catalyses the reaction a beta-lactam + H2O = a substituted beta-amino acid. This is Beta-lactamase from Streptomyces albus G.